The following is a 204-amino-acid chain: Large ribosomal subunit protein eL15 (204 aa).

This sequence belongs to the eukaryotic ribosomal protein eL15 family. As to quaternary structure, component of the large ribosomal subunit.

The protein resides in the cytoplasm. Its function is as follows. Component of the large ribosomal subunit. The ribosome is a large ribonucleoprotein complex responsible for the synthesis of proteins in the cell. This chain is Large ribosomal subunit protein eL15 (rpl15), found in Hypophthalmichthys molitrix (Silver carp).